A 32-amino-acid polypeptide reads, in one-letter code: MSDIN-like toxin proprotein 1 (32 aa).

A propeptide spanning residues Met-1–Pro-10 is cleaved from the precursor. Positions Ile-11 to Pro-18 form a cross-link, cyclopeptide (Ile-Pro). A propeptide spanning residues Cys-19–Arg-32 is cleaved from the precursor.

It belongs to the MSDIN fungal toxin family. In terms of processing, processed by the macrocyclase-peptidase enzyme POPB to yield a toxic cyclic octapeptide. POPB first removes 10 residues from the N-terminus. Conformational trapping of the remaining peptide forces the enzyme to release this intermediate rather than proceed to macrocyclization. The enzyme rebinds the remaining peptide in a different conformation and catalyzes macrocyclization of the N-terminal 8 residues. As to expression, expressed in basidiocarps.

In terms of biological role, probable toxin that belongs to the MSDIN-like toxin family responsible for a large number of food poisoning cases and deaths. The polypeptide is MSDIN-like toxin proprotein 1 (Amanita exitialis (Guangzhou destroying angel)).